Reading from the N-terminus, the 159-residue chain is ATP synthase subunit b 2 (159 aa).

A helical transmembrane segment spans residues 1-21 (MDATFWAFIALVIFVAIVVYM).

Belongs to the ATPase B chain family. In terms of assembly, F-type ATPases have 2 components, F(1) - the catalytic core - and F(0) - the membrane proton channel. F(1) has five subunits: alpha(3), beta(3), gamma(1), delta(1), epsilon(1). F(0) has three main subunits: a(1), b(2) and c(10-14). The alpha and beta chains form an alternating ring which encloses part of the gamma chain. F(1) is attached to F(0) by a central stalk formed by the gamma and epsilon chains, while a peripheral stalk is formed by the delta and b chains.

It localises to the cell inner membrane. F(1)F(0) ATP synthase produces ATP from ADP in the presence of a proton or sodium gradient. F-type ATPases consist of two structural domains, F(1) containing the extramembraneous catalytic core and F(0) containing the membrane proton channel, linked together by a central stalk and a peripheral stalk. During catalysis, ATP synthesis in the catalytic domain of F(1) is coupled via a rotary mechanism of the central stalk subunits to proton translocation. Functionally, component of the F(0) channel, it forms part of the peripheral stalk, linking F(1) to F(0). This chain is ATP synthase subunit b 2, found in Brucella abortus (strain S19).